A 309-amino-acid polypeptide reads, in one-letter code: Ornithine carbamoyltransferase (309 aa).

Carbamoyl phosphate-binding positions include Ser-57 to Thr-60, Gln-84, Arg-108, and His-135 to Gln-138. L-ornithine-binding positions include Asn-166, Asp-224, and Ser-228–Met-229. Carbamoyl phosphate is bound by residues Cys-264–Leu-265 and Arg-292.

It belongs to the aspartate/ornithine carbamoyltransferase superfamily. OTCase family.

It is found in the cytoplasm. The enzyme catalyses carbamoyl phosphate + L-ornithine = L-citrulline + phosphate + H(+). It functions in the pathway amino-acid biosynthesis; L-arginine biosynthesis; L-arginine from L-ornithine and carbamoyl phosphate: step 1/3. Functionally, reversibly catalyzes the transfer of the carbamoyl group from carbamoyl phosphate (CP) to the N(epsilon) atom of ornithine (ORN) to produce L-citrulline. The chain is Ornithine carbamoyltransferase from Paracidovorax citrulli (strain AAC00-1) (Acidovorax citrulli).